The following is a 516-amino-acid chain: MLSINDLNMDVILHLLTFLTDKNKLNFMMTCTHLYQFISCVKYNNFQLFDKIRGLSFRNNFKKIIYFKEIKERENKNTVFVLKSNRDKIPLGTTCIKTGRYFNFLEMGVIPEGIISLEFCEYFNHTLKKGHIPETVTHLTINNGFRHMEKGSIPNSVTHLIFGENFNKMIDVGVIPNSVVYLKFGRVFNQSIKNVIPHNVKYLSLMYSFNQPISEEIYIDDTLKTISYIPKSVKYFDYETSNDEFDFKILSENITYLNIIINKHIYPGDIPSSVTRLGLLSNEDVRPEAIPDNVTHLSFDLYYFGNYSLNQLIHKNITHLNLGDLSVSCDRIPNGVTHLTYNPKYLTKNSIPNSVTHLTINNKIKGSIDRCIPNSVVYLNFNGTYDNIIYKGDIPDNVRCLIFGNNFDQYIEEGAIPNSVVCLNFGKLYNKPVNNVIPNNVKNLTFGYEFNKPIENAIPNNTNHIEFGYMFNQSLKNSIPDSVTRLVFNYGLKSIYKINKKFMNNIPKTVSVILFR.

Residues 4–49 (INDLNMDVILHLLTFLTDKNKLNFMMTCTHLYQFISCVKYNNFQLF) enclose the F-box domain. FNIP repeat units follow at residues 123–165 (FNHT…FGEN), 166–208 (FNKM…LMYS), 341–383 (YNPK…NFNG), 385–428 (YDNI…FGKL), and 429–470 (YNKP…FGYM).

The sequence is that of Putative F-box and FNIP repeat-containing protein L414 from Acanthamoeba polyphaga (Amoeba).